Consider the following 122-residue polypeptide: Acidic phospholipase A2 Tpu-E6c (122 aa).

7 disulfide bridges follow: Cys-26–Cys-115, Cys-28–Cys-44, Cys-43–Cys-95, Cys-49–Cys-122, Cys-50–Cys-88, Cys-57–Cys-81, and Cys-75–Cys-86. 3 residues coordinate Ca(2+): Tyr-27, Gly-29, and Gly-31. His-47 is an active-site residue. Residue Asp-48 participates in Ca(2+) binding. Asp-89 is an active-site residue.

As to quaternary structure, monomer. Requires Ca(2+) as cofactor. In terms of tissue distribution, expressed by the venom gland.

It is found in the secreted. It carries out the reaction a 1,2-diacyl-sn-glycero-3-phosphocholine + H2O = a 1-acyl-sn-glycero-3-phosphocholine + a fatty acid + H(+). Snake venom phospholipase A2 (PLA2) that impairs hemostasis. It weakly inhibits ADP-induced platelet aggregation when tested on platelet rich plasma from human and rabbit blood (15-25% of inhibition at 5-10 ug of enzyme), and dose-dependently inhibits blood coagulation, possibly by inhibiting thrombin activation. Exhibits high hydrolytic activities toward L-dipalmitoyl phosphatidylcholine. PLA2 catalyzes the calcium-dependent hydrolysis of the 2-acyl groups in 3-sn-phosphoglycerides. In Craspedocephalus puniceus (Flat-nosed pitviper), this protein is Acidic phospholipase A2 Tpu-E6c.